The following is a 643-amino-acid chain: MNANPKFLSADAHVDAAAVAPLPNSRKVYVTGSQPDIRVPMREITQADTPTGFGGEKNPPIYVYDTSGPYTDPDAKIDIRAGLPALRQGWIEARGDTEVLDGLSSQYGLERAADPATADLRFPGLHRNPRRAQPGKNVTQMHYARQGIITPEMEYIAIRENQRRAEYIESLKSSGPNGAKLAAMMGRQHPGQAFGAAAFGANALAEITPEFVRDEIARGRAIIPANINHPESEPMIIGRNFLVKINANIGNSAVTSSIGEEVDKMTWAIRWGGDTVMDLSTGKHIHETREWIIRNSPVPIGTVPIYQALEKVNGKAEDLTWEIFRDTLIEQAEQGVDYFTIHAGVRLQYVPLTANRMTGIVSRGGSIMAKWCLAHHKESFLYEHFEEICEIMKAYDVSFSLGDGLRPGSIYDANDEAQLGELKTLGELTQIAWKHDVQVMIEGPGHVPMQLIKENMDLQLDWCKEAPFYTLGPLTTDIAPGYDHITSGIGAAMIGWFGTAMLCYVTPKEHLGLPNKDDVKEGIITYKLAAHAADLAKGHPGAQVRDNALSKARFEFRWEDQFNIGLDPDKAREFHDETLPKDSAKVAHFCSMCGPHFCSMKITQDVREFAAQQGVSETEALKKGMEVKAVEFVKTGAEIYHRQ.

Substrate-binding positions include Asn-248, Met-277, Tyr-306, His-342, 362–364 (SRG), 403–406 (DGLR), and Glu-442. Residue His-446 coordinates Zn(2+). Substrate is bound at residue Tyr-469. His-510 lines the Zn(2+) pocket. The [4Fe-4S] cluster site is built by Cys-590, Cys-593, and Cys-598.

This sequence belongs to the ThiC family. As to quaternary structure, homodimer. Requires [4Fe-4S] cluster as cofactor.

It carries out the reaction 5-amino-1-(5-phospho-beta-D-ribosyl)imidazole + S-adenosyl-L-methionine = 4-amino-2-methyl-5-(phosphooxymethyl)pyrimidine + CO + 5'-deoxyadenosine + formate + L-methionine + 3 H(+). The protein operates within cofactor biosynthesis; thiamine diphosphate biosynthesis. Its function is as follows. Catalyzes the synthesis of the hydroxymethylpyrimidine phosphate (HMP-P) moiety of thiamine from aminoimidazole ribotide (AIR) in a radical S-adenosyl-L-methionine (SAM)-dependent reaction. The polypeptide is Phosphomethylpyrimidine synthase (Burkholderia ambifaria (strain ATCC BAA-244 / DSM 16087 / CCUG 44356 / LMG 19182 / AMMD) (Burkholderia cepacia (strain AMMD))).